The sequence spans 114 residues: Large ribosomal subunit protein uL18 (114 aa).

This sequence belongs to the universal ribosomal protein uL18 family. As to quaternary structure, part of the 50S ribosomal subunit; part of the 5S rRNA/L5/L18/L25 subcomplex. Contacts the 5S and 23S rRNAs.

Functionally, this is one of the proteins that bind and probably mediate the attachment of the 5S RNA into the large ribosomal subunit, where it forms part of the central protuberance. The sequence is that of Large ribosomal subunit protein uL18 from Bacteroides fragilis (strain ATCC 25285 / DSM 2151 / CCUG 4856 / JCM 11019 / LMG 10263 / NCTC 9343 / Onslow / VPI 2553 / EN-2).